The sequence spans 639 residues: Chaperone protein HtpG (639 aa).

An a; substrate-binding region spans residues 1 to 347; that stretch reads MSHQETHGFQ…SNDLPLNVSR (347 aa). The b stretch occupies residues 348-564; it reads EILQDNKITT…AGEMSSQMIK (217 aa). The tract at residues 565–639 is c; the sequence is LMQAAGQAVT…MNKMLLASVK (75 aa).

This sequence belongs to the heat shock protein 90 family. As to quaternary structure, homodimer.

It localises to the cytoplasm. Functionally, molecular chaperone. Has ATPase activity. The polypeptide is Chaperone protein HtpG (Shewanella loihica (strain ATCC BAA-1088 / PV-4)).